A 279-amino-acid chain; its full sequence is Movement protein (279 aa).

Residues 246–279 (SESEELNVESPPAAIGSSSASRSEAFRPQVVNGL) form a disordered region. Low complexity predominate over residues 254 to 268 (ESPPAAIGSSSASRS).

Belongs to the cucumovirus movement protein family.

It is found in the host cell junction. The protein localises to the host plasmodesma. Transports viral genome to neighboring plant cells directly through plasmosdesmata, without any budding. The movement protein allows efficient cell to cell propagation, by bypassing the host cell wall barrier. Acts by forming a tubular structure at the host plasmodesmata, enlarging it enough to allow free passage of virion capsids. This Cucumber mosaic virus (strain N) (CMV) protein is Movement protein.